A 341-amino-acid chain; its full sequence is Biotin synthase (341 aa).

A Radical SAM core domain is found at 40-267 (AEIQVSTLLS…RSMVRLSAGR (228 aa)). Residues cysteine 55, cysteine 59, and cysteine 62 each contribute to the [4Fe-4S] cluster site. The [2Fe-2S] cluster site is built by cysteine 99, cysteine 130, cysteine 190, and arginine 262.

It belongs to the radical SAM superfamily. Biotin synthase family. In terms of assembly, homodimer. [4Fe-4S] cluster is required as a cofactor. Requires [2Fe-2S] cluster as cofactor.

The enzyme catalyses (4R,5S)-dethiobiotin + (sulfur carrier)-SH + 2 reduced [2Fe-2S]-[ferredoxin] + 2 S-adenosyl-L-methionine = (sulfur carrier)-H + biotin + 2 5'-deoxyadenosine + 2 L-methionine + 2 oxidized [2Fe-2S]-[ferredoxin]. The protein operates within cofactor biosynthesis; biotin biosynthesis; biotin from 7,8-diaminononanoate: step 2/2. Its function is as follows. Catalyzes the conversion of dethiobiotin (DTB) to biotin by the insertion of a sulfur atom into dethiobiotin via a radical-based mechanism. The chain is Biotin synthase from Xylella fastidiosa (strain M12).